The sequence spans 270 residues: Formamidopyrimidine-DNA glycosylase (270 aa).

Residue Pro2 is the Schiff-base intermediate with DNA of the active site. Glu3 serves as the catalytic Proton donor. Catalysis depends on Lys58, which acts as the Proton donor; for beta-elimination activity. DNA is bound by residues His92, Arg111, and Arg153. Residues 238-270 (SVYGASVCPVCGGALRQIRLAQRGTWFCPRCQR) form an FPG-type zinc finger. Arg260 (proton donor; for delta-elimination activity) is an active-site residue.

This sequence belongs to the FPG family. Monomer. Zn(2+) is required as a cofactor.

It carries out the reaction Hydrolysis of DNA containing ring-opened 7-methylguanine residues, releasing 2,6-diamino-4-hydroxy-5-(N-methyl)formamidopyrimidine.. It catalyses the reaction 2'-deoxyribonucleotide-(2'-deoxyribose 5'-phosphate)-2'-deoxyribonucleotide-DNA = a 3'-end 2'-deoxyribonucleotide-(2,3-dehydro-2,3-deoxyribose 5'-phosphate)-DNA + a 5'-end 5'-phospho-2'-deoxyribonucleoside-DNA + H(+). Involved in base excision repair of DNA damaged by oxidation or by mutagenic agents. Acts as a DNA glycosylase that recognizes and removes damaged bases. Has a preference for oxidized purines, such as 7,8-dihydro-8-oxoguanine (8-oxoG). Has AP (apurinic/apyrimidinic) lyase activity and introduces nicks in the DNA strand. Cleaves the DNA backbone by beta-delta elimination to generate a single-strand break at the site of the removed base with both 3'- and 5'-phosphates. The protein is Formamidopyrimidine-DNA glycosylase of Halorhodospira halophila (strain DSM 244 / SL1) (Ectothiorhodospira halophila (strain DSM 244 / SL1)).